A 357-amino-acid chain; its full sequence is Scopoletin 8-hydroxylase (357 aa).

The Fe2OG dioxygenase domain maps to 206–307; it reads MGTKMVNMNY…RVSVPIFTAP (102 aa). Tyr-216 is a 2-oxoglutarate binding site. His-231, Asp-233, and His-288 together coordinate Fe cation. 2-oxoglutarate-binding residues include Arg-298 and Ser-300.

The protein belongs to the iron/ascorbate-dependent oxidoreductase family. L-ascorbate serves as cofactor. It depends on Fe(2+) as a cofactor. As to expression, expressed in both primary and lateral roots under iron-deficient conditions, except in apical root zones, and mostly in the root epidermal layer.

It carries out the reaction scopoletin + 2-oxoglutarate + O2 = fraxetin + succinate + CO2. The protein operates within phenylpropanoid metabolism. Involved in the pathway of sideretin biosynthesis from feruloyl CoA, a redox-active catecholic metabolite exuded by roots in response to iron deficiency in order to facilitate the uptake of iron; this pathway consists in the successive conversion from feruloyl CoA to scopoletin, from scopoletin to fraxetin and from fraxetin to sideretin. Catalyzes the biosynthesis of fraxetin via scopoletin hydroxylation. This Arabidopsis thaliana (Mouse-ear cress) protein is Scopoletin 8-hydroxylase.